The following is a 940-amino-acid chain: Isoleucine--tRNA ligase (940 aa).

Positions 58-68 (PYANGSIHIGH) match the 'HIGH' region motif. An L-isoleucyl-5'-AMP-binding site is contributed by E564. The 'KMSKS' region signature appears at 605-609 (KMSKS). ATP is bound at residue K608. 4 residues coordinate Zn(2+): C903, C906, C923, and C926.

This sequence belongs to the class-I aminoacyl-tRNA synthetase family. IleS type 1 subfamily. Monomer. The cofactor is Zn(2+).

It localises to the cytoplasm. The catalysed reaction is tRNA(Ile) + L-isoleucine + ATP = L-isoleucyl-tRNA(Ile) + AMP + diphosphate. Functionally, catalyzes the attachment of isoleucine to tRNA(Ile). As IleRS can inadvertently accommodate and process structurally similar amino acids such as valine, to avoid such errors it has two additional distinct tRNA(Ile)-dependent editing activities. One activity is designated as 'pretransfer' editing and involves the hydrolysis of activated Val-AMP. The other activity is designated 'posttransfer' editing and involves deacylation of mischarged Val-tRNA(Ile). This Shewanella baltica (strain OS185) protein is Isoleucine--tRNA ligase.